We begin with the raw amino-acid sequence, 1231 residues long: Multifunctional 2-oxoglutarate metabolism enzyme (1231 aa).

Positions 1 to 41 are 2-oxoglutarate dehydrogenase E1, N-terminal part; sequence MANISSPFGQNEWLVEEMYRKFRDDPSSVDPSWHEFLVDYS. The disordered stretch occupies residues 38–79; the sequence is VDYSPEPTSQPAAEPTRVTSPLVAERAAAAAPQAPPKPADTA. The interval 42–88 is linker; it reads PEPTSQPAAEPTRVTSPLVAERAAAAAPQAPPKPADTAAAGNGVVAA. Positions 58–69 are enriched in low complexity; that stretch reads PLVAERAAAAAP. Positions 89 to 337 are succinyltransferase E2; the sequence is LAAKTAVPPP…LRTIHELLLS (249 aa). Residue H316 is the Proton acceptor; for succinyltransferase activity of the active site. The interval 338–1231 is 2-oxoglutarate dehydrogenase E1, C-terminal part; it reads DGFWDEVFRE…QQEILDEAFG (894 aa). R542 contributes to the thiamine diphosphate binding site. 2-oxoglutarate-binding residues include H581 and S606. The thiamine diphosphate site is built by S606, L608, D649, A650, A651, and N682. D649 is a binding site for Mg(2+). Residues N682 and I684 each coordinate Mg(2+). A coiled-coil region spans residues 787–817; the sequence is DISMKEAEDALRDYQGQLERVFNEVRELEKH. Position 1024 (H1024) interacts with 2-oxoglutarate. The acetyl-CoA site is built by T1042, R1058, K1093, S1096, Q1146, R1153, and R1154.

Belongs to the 2-oxoacid dehydrogenase family. Kgd subfamily. In terms of assembly, homodimer. The 2-oxoglutarate dehydrogenase (ODH) complex contains multiple copies of three enzymatic components: 2-oxoglutarate dehydrogenase (E1), dihydrolipoamide succinyltransferase (E2) and lipoamide dehydrogenase (E3). It depends on Mg(2+) as a cofactor. The cofactor is thiamine diphosphate.

It catalyses the reaction glyoxylate + 2-oxoglutarate + H(+) = 2-hydroxy-3-oxoadipate + CO2. The enzyme catalyses 2-oxoglutarate + H(+) = succinate semialdehyde + CO2. The catalysed reaction is N(6)-[(R)-lipoyl]-L-lysyl-[protein] + 2-oxoglutarate + H(+) = N(6)-[(R)-S(8)-succinyldihydrolipoyl]-L-lysyl-[protein] + CO2. It carries out the reaction N(6)-[(R)-dihydrolipoyl]-L-lysyl-[protein] + succinyl-CoA = N(6)-[(R)-S(8)-succinyldihydrolipoyl]-L-lysyl-[protein] + CoA. It functions in the pathway carbohydrate metabolism; tricarboxylic acid cycle; succinate from 2-oxoglutarate (transferase route): step 1/2. It participates in carbohydrate metabolism; tricarboxylic acid cycle; succinyl-CoA from 2-oxoglutarate (dehydrogenase route): step 1/1. With respect to regulation, alpha-ketoglutarate dehydrogenase and decarboxylase activities are inhibited by unphosphorylated GarA, and allosterically activated by acetyl-CoA, the main substrate of the TCA cycle. Shows three enzymatic activities that share a first common step, the attack of thiamine-PP on 2-oxoglutarate (alpha-ketoglutarate, KG), leading to the formation of an enamine-thiamine-PP intermediate upon decarboxylation. Thus, displays KGD activity, catalyzing the decarboxylation from five-carbon 2-oxoglutarate to four-carbon succinate semialdehyde (SSA). Also catalyzes C-C bond formation between the activated aldehyde formed after decarboxylation of alpha-ketoglutarate and the carbonyl of glyoxylate (GLX), to yield 2-hydroxy-3-oxoadipate (HOA), which spontaneously decarboxylates to form 5-hydroxylevulinate (HLA). And is also a component of the 2-oxoglutarate dehydrogenase (ODH) complex, that catalyzes the overall conversion of 2-oxoglutarate to succinyl-CoA and CO(2). The KG decarboxylase and KG dehydrogenase reactions provide two alternative, tightly regulated, pathways connecting the oxidative and reductive branches of the TCA cycle. The chain is Multifunctional 2-oxoglutarate metabolism enzyme (kgd) from Mycobacterium tuberculosis (strain ATCC 25177 / H37Ra).